Here is a 465-residue protein sequence, read N- to C-terminus: Argininosuccinate lyase (465 aa).

It belongs to the lyase 1 family. Argininosuccinate lyase subfamily.

The protein localises to the cytoplasm. It carries out the reaction 2-(N(omega)-L-arginino)succinate = fumarate + L-arginine. It participates in amino-acid biosynthesis; L-arginine biosynthesis; L-arginine from L-ornithine and carbamoyl phosphate: step 3/3. The protein is Argininosuccinate lyase of Aromatoleum aromaticum (strain DSM 19018 / LMG 30748 / EbN1) (Azoarcus sp. (strain EbN1)).